Reading from the N-terminus, the 124-residue chain is Holo-[acyl-carrier-protein] synthase (124 aa).

Residues Asp-8 and Glu-60 each coordinate Mg(2+).

The protein belongs to the P-Pant transferase superfamily. AcpS family. It depends on Mg(2+) as a cofactor.

It localises to the cytoplasm. It carries out the reaction apo-[ACP] + CoA = holo-[ACP] + adenosine 3',5'-bisphosphate + H(+). Its function is as follows. Transfers the 4'-phosphopantetheine moiety from coenzyme A to a Ser of acyl-carrier-protein. The polypeptide is Holo-[acyl-carrier-protein] synthase (Wolbachia pipientis subsp. Culex pipiens (strain wPip)).